Reading from the N-terminus, the 760-residue chain is Xaa-Pro dipeptidyl-peptidase (760 aa).

Active-site charge relay system residues include Ser-349, Asp-469, and His-499.

The protein belongs to the peptidase S15 family. As to quaternary structure, homodimer.

It is found in the cytoplasm. It catalyses the reaction Hydrolyzes Xaa-Pro-|- bonds to release unblocked, N-terminal dipeptides from substrates including Ala-Pro-|-p-nitroanilide and (sequentially) Tyr-Pro-|-Phe-Pro-|-Gly-Pro-|-Ile.. Removes N-terminal dipeptides sequentially from polypeptides having unsubstituted N-termini provided that the penultimate residue is proline. The chain is Xaa-Pro dipeptidyl-peptidase from Streptococcus pyogenes serotype M12 (strain MGAS9429).